The following is a 266-amino-acid chain: Undecaprenyl-diphosphatase (266 aa).

Helical transmembrane passes span 1 to 21, 39 to 59, 87 to 107, 113 to 133, 143 to 163, 187 to 207, 218 to 238, and 244 to 264; these read MTLF…FLPI, QGLA…MIYF, WYVI…KGWI, TALV…YADA, GLTL…LIPG, FSFL…TLDL, ALLY…YLFL, and IGML…LWFV.

The protein belongs to the UppP family.

The protein localises to the cell inner membrane. The catalysed reaction is di-trans,octa-cis-undecaprenyl diphosphate + H2O = di-trans,octa-cis-undecaprenyl phosphate + phosphate + H(+). Catalyzes the dephosphorylation of undecaprenyl diphosphate (UPP). Confers resistance to bacitracin. The chain is Undecaprenyl-diphosphatase from Alteromonas mediterranea (strain DSM 17117 / CIP 110805 / LMG 28347 / Deep ecotype).